The primary structure comprises 425 residues: MLDIKWIRENPEKLDEALASRGIEPHAERLIALDLERRSHVVEVQCAQERRNSASKEIRQALAAGDQKTVERIKAEVEEIKTFLSSAAIKEKRLTESLEKILSAIPNIPLDSVPKGENEEANIVIRHFGTPPTFNFIPKEHFDLGQNLKQMNFERASRLSGARFTVLSGALARLERALGQFMLDVHVNEHGYEEISLPLLVRDEIVYGAAQLPKFSDDLFRTTDGRWLISTAEVPLVNLVNGEVLHESDLPLRFSSLTPCFRSEAGAAGRDTRGMLRQHQFWKVEMVSITTEEQSLIELERMTECAEDVLKRLELPFRTVVLSTGDMGFASCKTYDIEVWLPGQGCYREISSCSVCGDFQGRRMNARYRKDGDKTLHFVHSLNGSGTAIGRCLIAILENYQQADGSIIIPGALQPYMKGISRITA.

231 to 233 (TAE) contacts L-serine. 262-264 (RSE) is a binding site for ATP. Glu285 is a binding site for L-serine. Residue 349-352 (EISS) coordinates ATP. Ser385 serves as a coordination point for L-serine.

It belongs to the class-II aminoacyl-tRNA synthetase family. Type-1 seryl-tRNA synthetase subfamily. In terms of assembly, homodimer. The tRNA molecule binds across the dimer.

The protein localises to the cytoplasm. The catalysed reaction is tRNA(Ser) + L-serine + ATP = L-seryl-tRNA(Ser) + AMP + diphosphate + H(+). The enzyme catalyses tRNA(Sec) + L-serine + ATP = L-seryl-tRNA(Sec) + AMP + diphosphate + H(+). The protein operates within aminoacyl-tRNA biosynthesis; selenocysteinyl-tRNA(Sec) biosynthesis; L-seryl-tRNA(Sec) from L-serine and tRNA(Sec): step 1/1. Catalyzes the attachment of serine to tRNA(Ser). Is also able to aminoacylate tRNA(Sec) with serine, to form the misacylated tRNA L-seryl-tRNA(Sec), which will be further converted into selenocysteinyl-tRNA(Sec). The polypeptide is Serine--tRNA ligase (Bartonella bacilliformis (strain ATCC 35685 / KC583 / Herrer 020/F12,63)).